The following is a 289-amino-acid chain: 4-diphosphocytidyl-2-C-methyl-D-erythritol kinase (289 aa).

Residue lysine 10 is part of the active site. Position 94–104 (94–104 (PVAAGLAGGSS)) interacts with ATP. Residue aspartate 136 is part of the active site.

It belongs to the GHMP kinase family. IspE subfamily.

It carries out the reaction 4-CDP-2-C-methyl-D-erythritol + ATP = 4-CDP-2-C-methyl-D-erythritol 2-phosphate + ADP + H(+). It participates in isoprenoid biosynthesis; isopentenyl diphosphate biosynthesis via DXP pathway; isopentenyl diphosphate from 1-deoxy-D-xylulose 5-phosphate: step 3/6. In terms of biological role, catalyzes the phosphorylation of the position 2 hydroxy group of 4-diphosphocytidyl-2C-methyl-D-erythritol. In Bacillus anthracis (strain CDC 684 / NRRL 3495), this protein is 4-diphosphocytidyl-2-C-methyl-D-erythritol kinase.